The chain runs to 132 residues: Small ribosomal subunit protein uS8 (132 aa).

The protein belongs to the universal ribosomal protein uS8 family. In terms of assembly, part of the 30S ribosomal subunit. Contacts proteins S5 and S12.

In terms of biological role, one of the primary rRNA binding proteins, it binds directly to 16S rRNA central domain where it helps coordinate assembly of the platform of the 30S subunit. The chain is Small ribosomal subunit protein uS8 from Tropheryma whipplei (strain Twist) (Whipple's bacillus).